The primary structure comprises 122 residues: MQRIMLRAKLHRVTVTEADLHYEGSCGIDEDLLDAAGMREFERIELYNVTNGERFDTYIIKAARGSGAISLNGAAARRAQVGDLMIICTYGPMSEEESATHKPKVVLVDDANRVKEIRKFPA.

The Schiff-base intermediate with substrate; via pyruvic acid role is filled by serine 25. Position 25 is a pyruvic acid (Ser) (serine 25). Threonine 57 is a binding site for substrate. Tyrosine 58 functions as the Proton donor in the catalytic mechanism. 73 to 75 (GAA) serves as a coordination point for substrate.

This sequence belongs to the PanD family. As to quaternary structure, heterooctamer of four alpha and four beta subunits. It depends on pyruvate as a cofactor. Post-translationally, is synthesized initially as an inactive proenzyme, which is activated by self-cleavage at a specific serine bond to produce a beta-subunit with a hydroxyl group at its C-terminus and an alpha-subunit with a pyruvoyl group at its N-terminus.

The protein localises to the cytoplasm. It carries out the reaction L-aspartate + H(+) = beta-alanine + CO2. Its pathway is cofactor biosynthesis; (R)-pantothenate biosynthesis; beta-alanine from L-aspartate: step 1/1. Its function is as follows. Catalyzes the pyruvoyl-dependent decarboxylation of aspartate to produce beta-alanine. The protein is Aspartate 1-decarboxylase of Bordetella avium (strain 197N).